The primary structure comprises 28 residues: Trypsin inhibitor 2 (28 aa).

Intrachain disulfides connect Cys3–Cys20, Cys10–Cys22, and Cys16–Cys27.

The protein belongs to the protease inhibitor I7 (squash-type serine protease inhibitor) family.

It is found in the secreted. Its function is as follows. Inhibits trypsin. This is Trypsin inhibitor 2 from Momordica charantia (Bitter gourd).